A 158-amino-acid polypeptide reads, in one-letter code: Small ribosomal subunit protein uS10m (158 aa).

This sequence belongs to the universal ribosomal protein uS10 family.

The protein localises to the mitochondrion. The protein is Small ribosomal subunit protein uS10m (mrps-10) of Caenorhabditis briggsae.